Reading from the N-terminus, the 243-residue chain is Probable 6-phosphogluconolactonase (243 aa).

It belongs to the glucosamine/galactosamine-6-phosphate isomerase family. 6-phosphogluconolactonase subfamily.

It carries out the reaction 6-phospho-D-glucono-1,5-lactone + H2O = 6-phospho-D-gluconate + H(+). The protein operates within carbohydrate degradation; pentose phosphate pathway; D-ribulose 5-phosphate from D-glucose 6-phosphate (oxidative stage): step 2/3. Its function is as follows. Hydrolysis of 6-phosphogluconolactone to 6-phosphogluconate. This chain is Probable 6-phosphogluconolactonase, found in Drosophila melanogaster (Fruit fly).